A 119-amino-acid chain; its full sequence is Large ribosomal subunit protein uL18 (119 aa).

It belongs to the universal ribosomal protein uL18 family. Part of the 50S ribosomal subunit; part of the 5S rRNA/L5/L18/L25 subcomplex. Contacts the 5S and 23S rRNAs.

Functionally, this is one of the proteins that bind and probably mediate the attachment of the 5S RNA into the large ribosomal subunit, where it forms part of the central protuberance. The chain is Large ribosomal subunit protein uL18 from Roseobacter denitrificans (strain ATCC 33942 / OCh 114) (Erythrobacter sp. (strain OCh 114)).